A 174-amino-acid chain; its full sequence is UPF0398 protein LACR_0544 (174 aa).

Belongs to the UPF0398 family.

This Lactococcus lactis subsp. cremoris (strain SK11) protein is UPF0398 protein LACR_0544.